The chain runs to 152 residues: Large ribosomal subunit protein uL15 (152 aa).

The tract at residues 1–57 (MTSTLNTLKSNSGSRKKKLRKGRGIAAGQGASCGFGMRGQKSRSGRPTRPGFEGGQM) is disordered. Positions 14–23 (SRKKKLRKGR) are enriched in basic residues. A compositionally biased stretch (gly residues) spans 25–37 (IAAGQGASCGFGM).

The protein belongs to the universal ribosomal protein uL15 family. As to quaternary structure, part of the 50S ribosomal subunit.

Its function is as follows. Binds to the 23S rRNA. In Prochlorococcus marinus (strain MIT 9301), this protein is Large ribosomal subunit protein uL15.